Reading from the N-terminus, the 519-residue chain is Cytosol aminopeptidase (519 aa).

The residue at position 42 (serine 42) is a Phosphoserine. The residue at position 45 (lysine 45) is an N6-succinyllysine. At serine 54 the chain carries Phosphoserine. Residues lysine 61 and lysine 103 each carry the N6-succinyllysine modification. 2 positions are modified to phosphoserine: serine 180 and serine 194. 3 residues coordinate Zn(2+): leucine 202, methionine 203, and threonine 205. Serine 238 carries the post-translational modification Phosphoserine. 2 residues coordinate Zn(2+): lysine 282 and aspartate 287. Substrate contacts are provided by lysine 282, aspartate 287, serine 292, and lysine 294. Residue aspartate 287 participates in Mg(2+) binding. Lysine 294 is a catalytic residue. 4 residues coordinate Zn(2+): arginine 303, aspartate 305, aspartate 364, and glutamate 366. Positions 305 and 364 each coordinate substrate. 2 residues coordinate Mg(2+): aspartate 364 and glutamate 366. The active site involves arginine 368. Lysine 455 is modified (N6-acetyllysine; alternate). Lysine 455 carries the N6-succinyllysine; alternate modification. Lysine 476 is subject to N6-succinyllysine. The residue at position 489 (lysine 489) is an N6-acetyllysine; alternate. N6-succinyllysine; alternate is present on lysine 489.

This sequence belongs to the peptidase M17 family. Homohexamer. Zn(2+) serves as cofactor. Requires Mn(2+) as cofactor.

The protein localises to the cytoplasm. It catalyses the reaction Release of an N-terminal amino acid, Xaa-|-Yaa-, in which Xaa is preferably Leu, but may be other amino acids including Pro although not Arg or Lys, and Yaa may be Pro. Amino acid amides and methyl esters are also readily hydrolyzed, but rates on arylamides are exceedingly low.. The enzyme catalyses an S-substituted L-cysteinylglycine + H2O = an S-substituted L-cysteine + glycine. The catalysed reaction is L-cysteinylglycine + H2O = L-cysteine + glycine. It carries out the reaction S-benzyl-L-cysteinylglycine + H2O = S-benzyl-L-cysteine + glycine. It catalyses the reaction Release of N-terminal proline from a peptide.. With respect to regulation, zofenoprilat inhibits Cys-Gly hydrolysis activity. In terms of biological role, cytosolic metallopeptidase that catalyzes the removal of unsubstituted N-terminal hydrophobic amino acids from various peptides. The presence of Zn(2+) ions is essential for the peptidase activity, and the association with other cofactors can modulate the substrate spectificity of the enzyme. For instance, in the presence of Mn(2+), it displays a specific Cys-Gly hydrolyzing activity of Cys-Gly-S-conjugates. Involved in the metabolism of glutathione and in the degradation of glutathione S-conjugates, which may play a role in the control of the cell redox status. This Bos taurus (Bovine) protein is Cytosol aminopeptidase.